We begin with the raw amino-acid sequence, 170 residues long: Putative 5'(3')-deoxyribonucleotidase (170 aa).

The Nucleophile role is filled by D28. Residues D28, D30, and D134 each contribute to the Mg(2+) site. D30 (proton donor) is an active-site residue.

This sequence belongs to the 5'(3')-deoxyribonucleotidase family. The cofactor is Mg(2+).

Functionally, dephosphorylates the 5' and 2'(3')-phosphates of deoxyribonucleotides. The polypeptide is Putative 5'(3')-deoxyribonucleotidase (Vibrio parahaemolyticus (KVP40)).